The sequence spans 347 residues: Magnesium-chelatase subunit ChlI (347 aa).

41–48 contributes to the ATP binding site; the sequence is DRGTGKST.

It belongs to the Mg-chelatase subunits D/I family.

The protein localises to the plastid. It localises to the cyanelle. The catalysed reaction is protoporphyrin IX + Mg(2+) + ATP + H2O = Mg-protoporphyrin IX + ADP + phosphate + 3 H(+). Its pathway is porphyrin-containing compound metabolism; chlorophyll biosynthesis. In terms of biological role, involved in chlorophyll biosynthesis; introduces a magnesium ion into protoporphyrin IX to yield Mg-protoporphyrin IX. The chain is Magnesium-chelatase subunit ChlI (chlI) from Cyanophora paradoxa.